The following is a 414-amino-acid chain: Lactosylceramide alpha-2,3-sialyltransferase (414 aa).

Residues 1 to 65 (MHTEAVGGAA…MRRPSLLIKD (65 aa)) lie on the Cytoplasmic side of the membrane. Residues 66 to 86 (ICKCTLVAFGVWLLYILILNY) form a helical; Signal-anchor for type II membrane protein membrane-spanning segment. Over 87–414 (TAEECDMKRM…VVEDLSGGIH (328 aa)) the chain is Lumenal. Cys-194 and Cys-352 form a disulfide bridge. 3 N-linked (GlcNAc...) asparagine glycosylation sites follow: Asn-235, Asn-279, and Asn-389.

It belongs to the glycosyltransferase 29 family. Mainly expressed in brain, and then testis, heart and liver, almost all tissues showed some levels of the gene expression.

Its subcellular location is the golgi apparatus membrane. The enzyme catalyses a beta-D-Gal-(1-&gt;4)-beta-D-Glc-(1&lt;-&gt;1)-Cer(d18:1(4E)) + CMP-N-acetyl-beta-neuraminate = a ganglioside GM3 (d18:1(4E)) + CMP + H(+). It catalyses the reaction ganglioside GA2 (d18:1(4E)/18:0) + CMP-N-acetyl-beta-neuraminate = ganglioside GM2 (d18:1(4E)/18:0) + CMP + H(+). The catalysed reaction is a beta-D-Gal-(1&lt;-&gt;1')-ceramide + CMP-N-acetyl-beta-neuraminate = N-acetyl-alpha-neuraminosyl-(2-&gt;3)-beta-D-galactosyl-(1&lt;-&gt;1')-ceramide + CMP + H(+). It carries out the reaction ganglioside GA1 (d18:1(4E)/18:0) + CMP-N-acetyl-beta-neuraminate = ganglioside GM1 (d18:1(4E)/18:0) + CMP + H(+). In terms of biological role, (Microbial infection) Gangliosides GD1b and GT1b (derived from GM3) may serve as receptors for some C.botulinum neurotoxins (minimally types BoNT/A, B, C). Transfers the sialyl group (N-acetyl-alpha-neuraminyl or NeuAc) from CMP-NeuAc to the non-reducing terminal galactose (Gal) of glycosphingolipids forming gangliosides (important molecules involved in the regulation of multiple cellular processes, including cell proliferation and differentiation, apoptosis, embryogenesis, development, and oncogenesis). Mainly involved in the biosynthesis of ganglioside GM3 but can also use different glycolipids as substrate acceptors such as D-galactosylceramide (GalCer), asialo-GM2 (GA2) and asialo-GM1 (GA1), although less preferentially than beta-D-Gal-(1-&gt;4)-beta-D-Glc-(1&lt;-&gt;1)-Cer (LacCer). This is Lactosylceramide alpha-2,3-sialyltransferase (St3gal5) from Mus musculus (Mouse).